A 616-amino-acid polypeptide reads, in one-letter code: Chaperone protein HscA (616 aa).

It belongs to the heat shock protein 70 family.

Its function is as follows. Chaperone involved in the maturation of iron-sulfur cluster-containing proteins. Has a low intrinsic ATPase activity which is markedly stimulated by HscB. Involved in the maturation of IscU. In Shigella flexneri serotype 5b (strain 8401), this protein is Chaperone protein HscA.